A 120-amino-acid polypeptide reads, in one-letter code: Large ribosomal subunit protein bL12 (120 aa).

The protein belongs to the bacterial ribosomal protein bL12 family. In terms of assembly, homodimer. Part of the ribosomal stalk of the 50S ribosomal subunit. Forms a multimeric L10(L12)X complex, where L10 forms an elongated spine to which 2 to 4 L12 dimers bind in a sequential fashion. Binds GTP-bound translation factors.

Forms part of the ribosomal stalk which helps the ribosome interact with GTP-bound translation factors. Is thus essential for accurate translation. The polypeptide is Large ribosomal subunit protein bL12 (Alkaliphilus metalliredigens (strain QYMF)).